We begin with the raw amino-acid sequence, 415 residues long: L-cysteine:1D-myo-inositol 2-amino-2-deoxy-alpha-D-glucopyranoside ligase (415 aa).

Cys47 is a Zn(2+) binding site. L-cysteinyl-5'-AMP is bound by residues 47-50 (CGIT), Thr62, and 85-87 (NVT). The short motif at 49-59 (ITPYDATHLGH) is the 'HIGH' region element. The 'ERGGDP' region motif lies at 190-195 (ERGGDP). Residue Trp230 participates in L-cysteinyl-5'-AMP binding. Cys234 is a Zn(2+) binding site. Residue 252-254 (GSD) participates in L-cysteinyl-5'-AMP binding. Position 259 (His259) interacts with Zn(2+). Ile286 is a binding site for L-cysteinyl-5'-AMP. The 'KMSKS' region signature appears at 292-296 (KMSKS).

The protein belongs to the class-I aminoacyl-tRNA synthetase family. MshC subfamily. In terms of assembly, monomer. Requires Zn(2+) as cofactor.

It catalyses the reaction 1D-myo-inositol 2-amino-2-deoxy-alpha-D-glucopyranoside + L-cysteine + ATP = 1D-myo-inositol 2-(L-cysteinylamino)-2-deoxy-alpha-D-glucopyranoside + AMP + diphosphate + H(+). Catalyzes the ATP-dependent condensation of GlcN-Ins and L-cysteine to form L-Cys-GlcN-Ins. The protein is L-cysteine:1D-myo-inositol 2-amino-2-deoxy-alpha-D-glucopyranoside ligase (mshC) of Mycolicibacterium paratuberculosis (strain ATCC BAA-968 / K-10) (Mycobacterium paratuberculosis).